Reading from the N-terminus, the 255-residue chain is Hemin import ATP-binding protein HmuV (255 aa).

Residues 2 to 238 (LRAHNLHIRR…ESLKAVFGLE (237 aa)) enclose the ABC transporter domain. 34 to 41 (GPNGAGKS) is a binding site for ATP.

This sequence belongs to the ABC transporter superfamily. Heme (hemin) importer (TC 3.A.1.14.5) family. In terms of assembly, the complex is composed of two ATP-binding proteins (HmuV), two transmembrane proteins (HmuU) and a solute-binding protein (HmuT).

The protein resides in the cell inner membrane. Its function is as follows. Part of the ABC transporter complex HmuTUV involved in hemin import. Responsible for energy coupling to the transport system. The protein is Hemin import ATP-binding protein HmuV of Pseudomonas fluorescens (strain Pf0-1).